The sequence spans 112 residues: UPF0060 membrane protein AAur_4166 (112 aa).

4 consecutive transmembrane segments (helical) span residues I8–V28, A33–F53, V62–D82, and V91–G111.

Belongs to the UPF0060 family.

It localises to the cell membrane. This is UPF0060 membrane protein AAur_4166 from Paenarthrobacter aurescens (strain TC1).